Here is a 1293-residue protein sequence, read N- to C-terminus: Enterobactin synthase component F (1293 aa).

Residues 1 to 301 form an elongation/condensation region; sequence MSQHLPLVAA…NVLPLGIHIA (301 aa). The segment at 482-887 is adenylation; sequence SYREMREQVV…ALPDVEQAVT (406 aa). The 76-residue stretch at 971 to 1046 folds into the Carrier domain; that stretch reads APKAGSETII…KLATIIDGEE (76 aa). S1006 bears the O-(pantetheine 4'-phosphoryl)serine mark. Residues 1066-1293 are thioesterase; that stretch reads PTLFCFHPAS…GPIIRATLNR (228 aa). The active-site Proton acceptor; for thioesterase activity is the H1271.

It belongs to the ATP-dependent AMP-binding enzyme family. EntF subfamily. In terms of assembly, proteins EntB, EntD, EntE and EntF are the component of the enterobactin synthase. Components probably do not form a stable complex. EntF acts as a catalytic monomer. Pantetheine 4'-phosphate serves as cofactor. 4'-phosphopantetheine is transferred from CoA to a specific serine of apo-EntF by EntD. Holo-EntF so formed is then acylated with seryl-AMP.

It is found in the cytoplasm. The catalysed reaction is 3 2,3-dihydroxybenzoate + 3 L-serine + 6 ATP = enterobactin + 6 AMP + 6 diphosphate + 4 H(+). The enzyme catalyses holo-[peptidyl-carrier protein] + L-serine + ATP = L-seryl-[peptidyl-carrier protein] + AMP + diphosphate. Its pathway is siderophore biosynthesis; enterobactin biosynthesis. In terms of biological role, involved in the biosynthesis of the siderophore enterobactin (enterochelin), which is a macrocyclic trimeric lactone of N-(2,3-dihydroxybenzoyl)-serine. EntF catalyzes the activation of L-serine via ATP-dependent PPi exchange reaction to form seryladenylate. Activated L-serine is loaded onto the peptidyl carrier domain via a thioester linkage to the phosphopanthetheine moiety, forming seryl-S-Ppant-EntF. EntF acts then as the sole catalyst for the formation of the three amide and three ester linkages found in enterobactin, using seryladenylate and 2,3-dihydroxybenzoate-S-Ppant-EntB (DHB-S-Ppant-EntB) as substrates, via the formation of a DHB-Ser-S-Ppant-EntF intermediate. This chain is Enterobactin synthase component F (entF), found in Escherichia coli O157:H7.